A 272-amino-acid polypeptide reads, in one-letter code: ATP synthase subunit delta (272 aa).

It belongs to the ATPase delta chain family. As to quaternary structure, F-type ATPases have 2 components, F(1) - the catalytic core - and F(0) - the membrane proton channel. F(1) has five subunits: alpha(3), beta(3), gamma(1), delta(1), epsilon(1). F(0) has three main subunits: a(1), b(2) and c(10-14). The alpha and beta chains form an alternating ring which encloses part of the gamma chain. F(1) is attached to F(0) by a central stalk formed by the gamma and epsilon chains, while a peripheral stalk is formed by the delta and b chains.

The protein resides in the cell membrane. Functionally, f(1)F(0) ATP synthase produces ATP from ADP in the presence of a proton or sodium gradient. F-type ATPases consist of two structural domains, F(1) containing the extramembraneous catalytic core and F(0) containing the membrane proton channel, linked together by a central stalk and a peripheral stalk. During catalysis, ATP synthesis in the catalytic domain of F(1) is coupled via a rotary mechanism of the central stalk subunits to proton translocation. Its function is as follows. This protein is part of the stalk that links CF(0) to CF(1). It either transmits conformational changes from CF(0) to CF(1) or is implicated in proton conduction. This chain is ATP synthase subunit delta, found in Corynebacterium jeikeium (strain K411).